Here is a 206-residue protein sequence, read N- to C-terminus: Small ribosomal subunit protein uS4 (206 aa).

The S4 RNA-binding domain maps to 96 to 158 (SRLDNVVYRM…AKKQLRIQNA (63 aa)).

This sequence belongs to the universal ribosomal protein uS4 family. As to quaternary structure, part of the 30S ribosomal subunit. Contacts protein S5. The interaction surface between S4 and S5 is involved in control of translational fidelity.

Its function is as follows. One of the primary rRNA binding proteins, it binds directly to 16S rRNA where it nucleates assembly of the body of the 30S subunit. In terms of biological role, with S5 and S12 plays an important role in translational accuracy. The chain is Small ribosomal subunit protein uS4 from Francisella tularensis subsp. tularensis (strain FSC 198).